A 140-amino-acid chain; its full sequence is Putative pre-16S rRNA nuclease (140 aa).

The protein belongs to the YqgF nuclease family.

The protein localises to the cytoplasm. Functionally, could be a nuclease involved in processing of the 5'-end of pre-16S rRNA. This is Putative pre-16S rRNA nuclease from Halothermothrix orenii (strain H 168 / OCM 544 / DSM 9562).